We begin with the raw amino-acid sequence, 447 residues long: Ribosomal protein uS12 methylthiotransferase RimO (447 aa).

An MTTase N-terminal domain is found at 15 to 125 (PRVGFVSLGC…VMQAIHRHLP (111 aa)). Residues cysteine 24, cysteine 60, cysteine 89, cysteine 156, cysteine 160, and cysteine 163 each contribute to the [4Fe-4S] cluster site. Residues 142 to 379 (LTPKHYAYLK…MQWQEEISKK (238 aa)) enclose the Radical SAM core domain. Residues 379–447 (KRLAGKKGRI…GIHDLWAKKI (69 aa)) form the TRAM domain.

This sequence belongs to the methylthiotransferase family. RimO subfamily. It depends on [4Fe-4S] cluster as a cofactor.

The protein localises to the cytoplasm. It catalyses the reaction L-aspartate(89)-[ribosomal protein uS12]-hydrogen + (sulfur carrier)-SH + AH2 + 2 S-adenosyl-L-methionine = 3-methylsulfanyl-L-aspartate(89)-[ribosomal protein uS12]-hydrogen + (sulfur carrier)-H + 5'-deoxyadenosine + L-methionine + A + S-adenosyl-L-homocysteine + 2 H(+). Functionally, catalyzes the methylthiolation of an aspartic acid residue of ribosomal protein uS12. The sequence is that of Ribosomal protein uS12 methylthiotransferase RimO from Nitrosomonas europaea (strain ATCC 19718 / CIP 103999 / KCTC 2705 / NBRC 14298).